The sequence spans 76 residues: Sulfur carrier protein TusA (76 aa).

Cysteine 14 functions as the Cysteine persulfide intermediate in the catalytic mechanism.

The protein belongs to the sulfur carrier protein TusA family. In terms of assembly, interacts with IscS.

The protein resides in the cytoplasm. Its pathway is tRNA modification. Functionally, sulfur carrier protein involved in sulfur trafficking in the cell. Part of a sulfur-relay system required for 2-thiolation during synthesis of 2-thiouridine of the modified wobble base 5-methylaminomethyl-2-thiouridine (mnm(5)s(2)U) in tRNA. Interacts with IscS and stimulates its cysteine desulfurase activity. Accepts an activated sulfur from IscS, which is then transferred to TusD, and thus determines the direction of sulfur flow from IscS to 2-thiouridine formation. Also appears to be involved in sulfur transfer for the biosynthesis of molybdopterin. This Buchnera aphidicola subsp. Acyrthosiphon pisum (strain Tuc7) protein is Sulfur carrier protein TusA.